We begin with the raw amino-acid sequence, 51 residues long: MEEEKAVSLAKEIIELDIKRDEMLETFMQLAGEQAFQLLRSVQNGQYRKSS.

Positions 3-30 (EEKAVSLAKEIIELDIKRDEMLETFMQL) form a coiled coil.

This is an uncharacterized protein from Bacillus subtilis (strain 168).